Reading from the N-terminus, the 384-residue chain is MNALVNLLDLDADALTAYCGELGEKPFRARQLQRWIHHYGASRFDAMSDLAKSLREKLATRAEIRAPAAITDHLSADGTRKWLLDVGQGNAVETVYIPEETRGTLCVSSQAGCAVNCRFCSTGKQGFSRNLSTGEIIGQLWMAEFAMREQLGRGPKDDRVISNVVMMGMGEPLLNYDAVVPAMRLMLDDNAYGLSRRRVTLSTSGVVPMMDRLSKDLPVALAVSLHASNDALRDVLVPLNKKYPLAELMAACRRYLEFAPRDFITFEYCMLDGVNDGVEHARELLKLVADVPCKFNLIPFNPFPESGLKRSNNDQIRRFAQVLMDAGIVTTIRKTRGDDIDAACGQLAGEVKDRTRLVERGKFGKITPLVPVAASGQPREVRPA.

The active-site Proton acceptor is the Glu93. The region spanning 99 to 339 (EETRGTLCVS…TTIRKTRGDD (241 aa)) is the Radical SAM core domain. Residues Cys106 and Cys344 are joined by a disulfide bond. Residues Cys113, Cys117, and Cys120 each coordinate [4Fe-4S] cluster. S-adenosyl-L-methionine-binding positions include 170–171 (GE), Ser202, 224–226 (SLH), and Asn301. Catalysis depends on Cys344, which acts as the S-methylcysteine intermediate.

Belongs to the radical SAM superfamily. RlmN family. It depends on [4Fe-4S] cluster as a cofactor.

Its subcellular location is the cytoplasm. It carries out the reaction adenosine(2503) in 23S rRNA + 2 reduced [2Fe-2S]-[ferredoxin] + 2 S-adenosyl-L-methionine = 2-methyladenosine(2503) in 23S rRNA + 5'-deoxyadenosine + L-methionine + 2 oxidized [2Fe-2S]-[ferredoxin] + S-adenosyl-L-homocysteine. The enzyme catalyses adenosine(37) in tRNA + 2 reduced [2Fe-2S]-[ferredoxin] + 2 S-adenosyl-L-methionine = 2-methyladenosine(37) in tRNA + 5'-deoxyadenosine + L-methionine + 2 oxidized [2Fe-2S]-[ferredoxin] + S-adenosyl-L-homocysteine. In terms of biological role, specifically methylates position 2 of adenine 2503 in 23S rRNA and position 2 of adenine 37 in tRNAs. m2A2503 modification seems to play a crucial role in the proofreading step occurring at the peptidyl transferase center and thus would serve to optimize ribosomal fidelity. In Cupriavidus necator (strain ATCC 17699 / DSM 428 / KCTC 22496 / NCIMB 10442 / H16 / Stanier 337) (Ralstonia eutropha), this protein is Dual-specificity RNA methyltransferase RlmN.